A 292-amino-acid chain; its full sequence is Mycothiol acetyltransferase (292 aa).

2 N-acetyltransferase domains span residues 2–138 (AEVV…PSAP) and 141–292 (VTVR…YAHS). A 1D-myo-inositol 2-(L-cysteinylamino)-2-deoxy-alpha-D-glucopyranoside-binding site is contributed by Glu33. Acetyl-CoA is bound at residue 68–70 (AVV). 1D-myo-inositol 2-(L-cysteinylamino)-2-deoxy-alpha-D-glucopyranoside contacts are provided by Glu168, Lys215, and Glu225. Acetyl-CoA contacts are provided by residues 229 to 231 (VAV) and 236 to 242 (QGRGLGR). Tyr263 provides a ligand contact to 1D-myo-inositol 2-(L-cysteinylamino)-2-deoxy-alpha-D-glucopyranoside. 268–273 (NAAALH) serves as a coordination point for acetyl-CoA.

It belongs to the acetyltransferase family. MshD subfamily. In terms of assembly, monomer.

It catalyses the reaction 1D-myo-inositol 2-(L-cysteinylamino)-2-deoxy-alpha-D-glucopyranoside + acetyl-CoA = mycothiol + CoA + H(+). Functionally, catalyzes the transfer of acetyl from acetyl-CoA to desacetylmycothiol (Cys-GlcN-Ins) to form mycothiol. This is Mycothiol acetyltransferase from Tsukamurella paurometabola (strain ATCC 8368 / DSM 20162 / CCUG 35730 / CIP 100753 / JCM 10117 / KCTC 9821 / NBRC 16120 / NCIMB 702349 / NCTC 13040) (Corynebacterium paurometabolum).